A 511-amino-acid polypeptide reads, in one-letter code: MRIIPRTMSTQHPDNAKVPEWAKSEVIEGEDEVKEAFLAYSMYGVHEVMWDAEGKDVDTHVVRKLLSNYPDYFREHILGKDVFLTYRLPNPKVEGADRKVFAETMESIPITYDLAEKFYGNGITVPVFEVILPMTTSNLEIISVARYYEKAVANEDELELYDGVKVKDLVGEIYPKVIEVIPLVEDRDSLQNIDNIVEGYYKVIKPKYMRVFLARSDPAMNYGMITAVLSVKIALSELYKLSESLNFEIYPIIGVGSLPFRGHLSPENYEKVLEEYKGVYTYTIQSAFKYDYDYDKVKSAISSINNSRIGPAKILEKYEEDVLRKITILYTERYQPIIENLANAINDVSVLLPRRRARKLHIGLFGYSRSAGKVSLPRAISFVGSLYSIGIPPELIGISSLSNLDEKEWDIFKQNYVNFKHDLQTAARFFNWESFELIKDIWKISEDTIAKIKEDIDYAESVIGIKLGGIDYDSRKHILMSSLFLLSFKEKILQESKKYLYEMALIRRSLG.

The protein belongs to the PEPCase type 2 family. Homotetramer. It depends on Mg(2+) as a cofactor.

It catalyses the reaction oxaloacetate + phosphate = phosphoenolpyruvate + hydrogencarbonate. Functionally, catalyzes the irreversible beta-carboxylation of phosphoenolpyruvate (PEP) to form oxaloacetate (OAA), a four-carbon dicarboxylic acid source for the tricarboxylic acid cycle. The polypeptide is Phosphoenolpyruvate carboxylase (Saccharolobus islandicus (strain Y.N.15.51 / Yellowstone #2) (Sulfolobus islandicus)).